Consider the following 241-residue polypeptide: tRNA (guanine-N(7)-)-methyltransferase B (241 aa).

S-adenosyl-L-methionine-binding residues include G61, E84, R86, N117, A118, and L137. D140 is a catalytic residue. The segment at 141–149 (PHFKKTKHK) is alphaC helix. Residues T215 and E217 each contribute to the S-adenosyl-L-methionine site. The tract at residues 215–223 (TEEGKKVQR) is alpha6 helix.

This sequence belongs to the class I-like SAM-binding methyltransferase superfamily. TrmB family. Catalytic component of the METTL1-WDR4 complex, composed of mettl1 and wdr4.

It is found in the nucleus. It catalyses the reaction guanosine(46) in tRNA + S-adenosyl-L-methionine = N(7)-methylguanosine(46) in tRNA + S-adenosyl-L-homocysteine. The catalysed reaction is a guanosine in mRNA + S-adenosyl-L-methionine = an N(7)-methylguanosine in mRNA + S-adenosyl-L-homocysteine. The enzyme catalyses a guanosine in miRNA + S-adenosyl-L-methionine = an N(7)-methylguanosine in miRNA + S-adenosyl-L-homocysteine. Its pathway is tRNA modification; N(7)-methylguanine-tRNA biosynthesis. Functionally, catalytic component of METTL1-WDR4 methyltransferase complex that mediates the formation of N(7)-methylguanine in a subset of RNA species, such as tRNAs, mRNAs and microRNAs (miRNAs). Catalyzes the formation of N(7)-methylguanine at position 46 (m7G46) in a large subset of tRNAs that contain the 5'-RAGGU-3' motif within the variable loop. M7G46 interacts with C13-G22 in the D-loop to stabilize tRNA tertiary structure and protect tRNAs from decay. Also acts as a methyltransferase for a subset of internal N(7)-methylguanine in mRNAs. Internal N(7)-methylguanine methylation of mRNAs in response to stress promotes their relocalization to stress granules, thereby suppressing their translation. Also methylates a specific subset of miRNAs. In Xenopus tropicalis (Western clawed frog), this protein is tRNA (guanine-N(7)-)-methyltransferase B (mettl1-B).